Consider the following 261-residue polypeptide: Cytochrome c oxidase subunit 3 (261 aa).

The Mitochondrial matrix segment spans residues 1 to 15; that stretch reads MVHQSHAYHMLKPSP. The helical transmembrane segment at 16-34 threads the bilayer; the sequence is WPLTGALSALLMTSGLAMW. Topologically, residues 35 to 40 are mitochondrial intermembrane; that stretch reads FHFHST. A helical transmembrane segment spans residues 41-66; the sequence is TLLLTGMLTNALTMYQWWRDVVREST. Residues 67–72 lie on the Mitochondrial matrix side of the membrane; sequence YQGHHT. Residues 73–105 traverse the membrane as a helical segment; sequence LPVQKGLRYGMILFITSEVFFFAGFFWAFYHSS. The Mitochondrial intermembrane segment spans residues 106-128; it reads LAPTPQLGGHWPPTGITPLNPLE. A helical transmembrane segment spans residues 129 to 152; that stretch reads VPLLNTAVLLASGVSITWAHHSLM. Residues 153-155 are Mitochondrial matrix-facing; it reads ENN. Residues 156–183 form a helical membrane-spanning segment; sequence RTQMIQALLITILLGIYFTLLQASEYIE. At 184 to 190 the chain is on the mitochondrial intermembrane side; that stretch reads APFTISD. Residues 191–223 traverse the membrane as a helical segment; the sequence is GIYGSTFFMTTGFHGLHVIIGSTFLTVCLSCQL. Topologically, residues 224–232 are mitochondrial matrix; that stretch reads LFHFTSKHH. A helical transmembrane segment spans residues 233–256; it reads FGFEAAAWYWHFVDVVWLFLYVSI. At 257–261 the chain is on the mitochondrial intermembrane side; sequence YWWGS.

This sequence belongs to the cytochrome c oxidase subunit 3 family. In terms of assembly, component of the cytochrome c oxidase (complex IV, CIV), a multisubunit enzyme composed of 14 subunits. The complex is composed of a catalytic core of 3 subunits MT-CO1, MT-CO2 and MT-CO3, encoded in the mitochondrial DNA, and 11 supernumerary subunits COX4I, COX5A, COX5B, COX6A, COX6B, COX6C, COX7A, COX7B, COX7C, COX8 and NDUFA4, which are encoded in the nuclear genome. The complex exists as a monomer or a dimer and forms supercomplexes (SCs) in the inner mitochondrial membrane with NADH-ubiquinone oxidoreductase (complex I, CI) and ubiquinol-cytochrome c oxidoreductase (cytochrome b-c1 complex, complex III, CIII), resulting in different assemblies (supercomplex SCI(1)III(2)IV(1) and megacomplex MCI(2)III(2)IV(2)).

The protein resides in the mitochondrion inner membrane. The enzyme catalyses 4 Fe(II)-[cytochrome c] + O2 + 8 H(+)(in) = 4 Fe(III)-[cytochrome c] + 2 H2O + 4 H(+)(out). Functionally, component of the cytochrome c oxidase, the last enzyme in the mitochondrial electron transport chain which drives oxidative phosphorylation. The respiratory chain contains 3 multisubunit complexes succinate dehydrogenase (complex II, CII), ubiquinol-cytochrome c oxidoreductase (cytochrome b-c1 complex, complex III, CIII) and cytochrome c oxidase (complex IV, CIV), that cooperate to transfer electrons derived from NADH and succinate to molecular oxygen, creating an electrochemical gradient over the inner membrane that drives transmembrane transport and the ATP synthase. Cytochrome c oxidase is the component of the respiratory chain that catalyzes the reduction of oxygen to water. Electrons originating from reduced cytochrome c in the intermembrane space (IMS) are transferred via the dinuclear copper A center (CU(A)) of subunit 2 and heme A of subunit 1 to the active site in subunit 1, a binuclear center (BNC) formed by heme A3 and copper B (CU(B)). The BNC reduces molecular oxygen to 2 water molecules using 4 electrons from cytochrome c in the IMS and 4 protons from the mitochondrial matrix. This is Cytochrome c oxidase subunit 3 (MT-CO3) from Pongo pygmaeus (Bornean orangutan).